The chain runs to 242 residues: Ribonuclease PH (242 aa).

Phosphate contacts are provided by residues arginine 86 and 124-126 (GTR).

This sequence belongs to the RNase PH family. In terms of assembly, homohexameric ring arranged as a trimer of dimers.

The enzyme catalyses tRNA(n+1) + phosphate = tRNA(n) + a ribonucleoside 5'-diphosphate. Its function is as follows. Phosphorolytic 3'-5' exoribonuclease that plays an important role in tRNA 3'-end maturation. Removes nucleotide residues following the 3'-CCA terminus of tRNAs; can also add nucleotides to the ends of RNA molecules by using nucleoside diphosphates as substrates, but this may not be physiologically important. Probably plays a role in initiation of 16S rRNA degradation (leading to ribosome degradation) during starvation. This chain is Ribonuclease PH, found in Caulobacter sp. (strain K31).